The primary structure comprises 724 residues: uncharacterized protein (724 aa).

This is an uncharacterized protein from Treponema pallidum (strain Nichols).